A 283-amino-acid chain; its full sequence is 2-hydroxymuconate semialdehyde hydrolase (283 aa).

Residues 32–262 form the AB hydrolase-1 domain; it reads LMMIHGSGPG…QCGHWTQIEH (231 aa). Active-site residues include Ser-107, Asp-228, and His-256.

It belongs to the DmpD/TodF/XylF esterase family.

It carries out the reaction (2Z,4E)-2-hydroxy-6-oxohexa-2,4-dienoate + H2O = 2-oxopent-4-enoate + formate + H(+). It participates in aromatic compound metabolism; benzoate degradation via hydroxylation. Functionally, catalyzes the conversion of 2-hydroxymuconate semialdehyde to 2-hydroxypent-2,4-dienoate. This chain is 2-hydroxymuconate semialdehyde hydrolase (dmpD), found in Pseudomonas sp. (strain CF600).